Reading from the N-terminus, the 198-residue chain is Cerebellin-4 (198 aa).

The first 24 residues, 1–24 (MGSARRALSVVPAVLLILVLPVWA), serve as a signal peptide directing secretion. Asparagine 26 and asparagine 85 each carry an N-linked (GlcNAc...) asparagine glycan. The 136-residue stretch at 63-198 (AANSKVAFSA…TFSGFLVFPL (136 aa)) folds into the C1q domain.

Homohexamer; disulfide-linked homotrimers. The trimers are assembled via the globular C1q domains. The trimers associate via N-terminal cysteine residues to form disulfide-linked hexamers. May form oligomers with CBLN1, CBLN2 and CBLN3 prior to secretion. Once secreted, does not interact with other CBLN family members. Strongly interacts with DCC in a NTN1-displaceable fashion. Weakly binds to NRXN1 and NRXN2 long and short isoforms produced by alternative promoter usage. Interaction with NRXN3 short isoform is hardly detectable; no interaction at all with NRXN3 long isoform. Does not interact with NEO1, GRID1 and GRID2. Sialoglycoprotein. As to expression, expressed in brain with high levels in particular thalamic nuclei. In the thalamus, predominantly expressed in neurons within the parafascicular nucleus. Found in the hippocampus, mostly in the dendrites and somata of pyramidal neurons (at protein level). Very low or no expression in most other brain regions. Highly expressed in the ventral medial habenula.

It localises to the secreted. The protein resides in the synapse. Functionally, acts as a synaptic organizer in specific subsets of neurons in the brain. Essential for the formation and maintenance of inhibitory GABAergic synapses. Promotes the development of dendrite-targeting inhibitory GABAergic synapses made by somatostatin-positive interneurons. May contribute to the function of ventral medial habenula region of the brain implicated in the regulation of anxiety-related behaviors. May play a role in CBLN3 export from the endoplasmic reticulum and secretion. The protein is Cerebellin-4 (Cbln4) of Mus musculus (Mouse).